We begin with the raw amino-acid sequence, 312 residues long: Olfactory receptor-like protein COR5 (312 aa).

Residues methionine 1–proline 26 lie on the Extracellular side of the membrane. Residue asparagine 5 is glycosylated (N-linked (GlcNAc...) asparagine). The chain crosses the membrane as a helical span at residues leucine 27 to isoleucine 49. Over serine 50–threonine 57 the chain is Cytoplasmic. The helical transmembrane segment at proline 58–proline 79 threads the bilayer. Residues lysine 80–glutamine 100 lie on the Extracellular side of the membrane. Residues cysteine 97 and cysteine 179 are joined by a disulfide bond. A helical membrane pass occupies residues tyrosine 101 to tyrosine 120. Residues aspartate 121–alanine 139 are Cytoplasmic-facing. A helical transmembrane segment spans residues valine 140–leucine 164. The Extracellular portion of the chain corresponds to lysine 165 to tryptophan 205. A helical membrane pass occupies residues phenylalanine 206–valine 226. Over arginine 227–serine 239 the chain is Cytoplasmic. The helical transmembrane segment at threonine 240–leucine 260 threads the bilayer. At arginine 261–aspartate 271 the chain is on the extracellular side. A helical membrane pass occupies residues lysine 272 to tryptophan 292. The Cytoplasmic portion of the chain corresponds to arginine 293–histidine 312.

It belongs to the G-protein coupled receptor 1 family.

Its subcellular location is the cell membrane. Odorant receptor. The sequence is that of Olfactory receptor-like protein COR5 (COR5) from Gallus gallus (Chicken).